The sequence spans 310 residues: Metal ABC transporter substrate-binding lipoprotein ScbA (310 aa).

The N-terminal stretch at 1-19 is a signal peptide; that stretch reads MKKCRFLVLLLLAFVGLAA. Cys-20 is lipidated: N-palmitoyl cysteine. Cys-20 carries the S-diacylglycerol cysteine lipid modification. Positions 68, 140, 206, and 281 each coordinate a divalent metal cation.

This sequence belongs to the bacterial solute-binding protein 9 family.

It is found in the cell membrane. Part of an ATP-binding cassette (ABC) transport system involved in metal import. Binds a metal with high affinity and specificity and delivers it to the membrane permease for translocation into the cytoplasm. Part of an ATP-driven transport system for manganese. Does not exhibit adhesion properties. This chain is Metal ABC transporter substrate-binding lipoprotein ScbA (scbA), found in Streptococcus cristatus.